A 472-amino-acid polypeptide reads, in one-letter code: Nuclear receptor subfamily 0 group B member 1 (472 aa).

A run of 3 repeats spans residues methionine 1 to cysteine 67, phenylalanine 68 to cysteine 135, and phenylalanine 136 to tyrosine 202. The segment at methionine 1 to valine 255 is 4 X 67 AA tandem repeats. 3 consecutive short sequence motifs (LXXLL motif) follow at residues leucine 13 to leucine 17, leucine 80 to leucine 84, and leucine 148 to leucine 152. The 282-residue stretch at glutamine 190–lysine 471 folds into the NR LBD domain. Residues valine 203–valine 255 form a 4; truncated repeat. Positions valine 214–glutamate 231 are enriched in polar residues. Disordered regions lie at residues valine 214–tryptophan 238 and threonine 324–glutamine 343. Residues methionine 463–leucine 468 carry the AF-2 motif motif.

Belongs to the nuclear hormone receptor family. NR0 subfamily. As to quaternary structure, homodimer. Interacts with NR5A1, NR5A2, NR0B2 and with COPS2. Interacts with ESRRB; represses ESRRB activity at the GATA6 promoter. In terms of tissue distribution, expressed in adult cerebral cortex, spinal cord, thymus, heart, lung, ovary, testis, adrenal gland, hypothalamus, spleen and kidney.

The protein resides in the nucleus. It localises to the cytoplasm. Functionally, nuclear receptor that lacks a DNA-binding domain and acts as a corepressor that inhibits the transcriptional activity of other nuclear receptors through heterodimeric interactions. Component of a cascade required for the development of the hypothalamic-pituitary-adrenal-gonadal axis. May also have a role in the development of the embryo and in the maintenance of embryonic stem cell pluripotency. This Mus musculus (Mouse) protein is Nuclear receptor subfamily 0 group B member 1 (Nr0b1).